The chain runs to 109 residues: Large ribosomal subunit protein uL22 (109 aa).

The protein belongs to the universal ribosomal protein uL22 family. As to quaternary structure, part of the 50S ribosomal subunit.

Its function is as follows. This protein binds specifically to 23S rRNA; its binding is stimulated by other ribosomal proteins, e.g. L4, L17, and L20. It is important during the early stages of 50S assembly. It makes multiple contacts with different domains of the 23S rRNA in the assembled 50S subunit and ribosome. Functionally, the globular domain of the protein is located near the polypeptide exit tunnel on the outside of the subunit, while an extended beta-hairpin is found that lines the wall of the exit tunnel in the center of the 70S ribosome. This Methylobacillus flagellatus (strain ATCC 51484 / DSM 6875 / VKM B-1610 / KT) protein is Large ribosomal subunit protein uL22.